The primary structure comprises 415 residues: Serine/threonine transporter SstT (415 aa).

8 helical membrane passes run 21–41 (ILLG…AALA), 45–65 (LGTL…LVLV), 85–105 (FLYL…SVLF), 142–162 (ALLN…GIAF), 193–213 (LGIF…ALWG), 217–237 (LLMV…PLIV), 289–309 (VAIP…ITVL), and 331–351 (VVAS…LLLI).

Belongs to the dicarboxylate/amino acid:cation symporter (DAACS) (TC 2.A.23) family.

Its subcellular location is the cell inner membrane. It catalyses the reaction L-serine(in) + Na(+)(in) = L-serine(out) + Na(+)(out). The catalysed reaction is L-threonine(in) + Na(+)(in) = L-threonine(out) + Na(+)(out). Its function is as follows. Involved in the import of serine and threonine into the cell, with the concomitant import of sodium (symport system). In Pectobacterium atrosepticum (strain SCRI 1043 / ATCC BAA-672) (Erwinia carotovora subsp. atroseptica), this protein is Serine/threonine transporter SstT.